Reading from the N-terminus, the 477-residue chain is Interferon gamma receptor 1 (477 aa).

The first 25 residues, 1–25 (MGPQAAAGRMILLVVLMLSAKVGSG), serve as a signal peptide directing secretion. At 26–254 (ALTSTEDPEP…PPFHDDRKDS (229 aa)) the chain is on the extracellular side. 2 N-linked (GlcNAc...) asparagine glycosylation sites follow: asparagine 61 and asparagine 85. 4 disulfides stabilise this stretch: cysteine 83/cysteine 91, cysteine 128/cysteine 174, cysteine 203/cysteine 208, and cysteine 222/cysteine 243. The helical transmembrane segment at 255 to 275 (IWILVVAPLTVFTVVILVFAY) threads the bilayer. Residues 276–477 (WYTKKNSFKR…RLTGEAQELS (202 aa)) are Cytoplasmic-facing. Disordered regions lie at residues 335–386 (TVTA…LSSN) and 402–446 (SDSG…SGYD). Serine 362 bears the Phosphoserine mark. A Phosphothreonine modification is found at threonine 367. Residue serine 370 is modified to Phosphoserine. Threonine 373 and threonine 375 each carry phosphothreonine. The span at 375-386 (TQRRSFSLLSSN) shows a compositional bias: polar residues. Serine 379 and serine 402 each carry phosphoserine. Low complexity predominate over residues 402-416 (SDSGLVGSGSSISDL). Position 445 is a phosphotyrosine (tyrosine 445).

The protein belongs to the type II cytokine receptor family. Monomer. Heterodimer with IFNGR2, to form the IFNG receptor complex. Interacts with JAK1. Interacts (when phosphorylated) with STAT1. Interacts with SOCS1. Phosphorylated at Ser/Thr residues. Phosphorylation of Tyr-445 is required for IFNG receptor signal transduction. Influenza virus infection leads to phosphorylation in a CSNK1A1-dependent manner. Post-translationally, ubiquitinated after phosphorylation in a CSNK1A1-dependent manner, leading to the lysosome-dependent degradation. Proteasomally degraded through 'Lys-48'-mediated ubiquitination. Ubiquitination is necessary for efficient IFNGR1 signaling.

Its subcellular location is the cell membrane. In terms of biological role, receptor subunit for interferon gamma/INFG that plays crucial roles in antimicrobial, antiviral, and antitumor responses by activating effector immune cells and enhancing antigen presentation (, PubMed:20926559, PubMed:27286456). Associates with transmembrane accessory factor IFNGR2 to form a functional receptor. Upon ligand binding, the intracellular domain of IFNGR1 opens out to allow association of downstream signaling components JAK1 and JAK2. In turn, activated JAK1 phosphorylates IFNGR1 to form a docking site for STAT1. Subsequent phosphorylation of STAT1 leads to its dimerization, translocation to the nucleus, and stimulation of target gene transcription. STAT3 can also be activated in a similar manner although activation seems weaker. IFNGR1 intracellular domain phosphorylation also provides a docking site for SOCS1 that regulates the JAK-STAT pathway by competing with STAT1 binding to IFNGR1. This Mus musculus (Mouse) protein is Interferon gamma receptor 1.